Consider the following 430-residue polypeptide: Adenylosuccinate synthetase (430 aa).

Residues Gly12 to Lys18 and Gly40 to Thr42 contribute to the GTP site. Asp13 serves as the catalytic Proton acceptor. Mg(2+) contacts are provided by Asp13 and Gly40. IMP contacts are provided by residues Asp13–Lys16, Asn38–His41, Thr128, Arg142, Gln223, Thr238, and Arg302. The active-site Proton donor is His41. Thr298–Arg304 is a substrate binding site. GTP is bound by residues Arg304, Leu330 to Asp332, and Ser412 to Gly414.

It belongs to the adenylosuccinate synthetase family. In terms of assembly, homodimer. Mg(2+) serves as cofactor.

It is found in the cytoplasm. It catalyses the reaction IMP + L-aspartate + GTP = N(6)-(1,2-dicarboxyethyl)-AMP + GDP + phosphate + 2 H(+). It participates in purine metabolism; AMP biosynthesis via de novo pathway; AMP from IMP: step 1/2. Plays an important role in the de novo pathway of purine nucleotide biosynthesis. Catalyzes the first committed step in the biosynthesis of AMP from IMP. In Listeria monocytogenes serotype 4b (strain CLIP80459), this protein is Adenylosuccinate synthetase.